The following is a 690-amino-acid chain: Secreted LysM effector Vd5LysM (690 aa).

Residues N4 and N69 are each glycosylated (N-linked (GlcNAc...) asparagine). LysM domains follow at residues 203 to 248, 253 to 301, and 341 to 387; these read TQYT…SLCI, DTVT…TLCI, and RWYN…SYCV. N260, N295, N375, N410, N423, and N492 each carry an N-linked (GlcNAc...) asparagine glycan. The tract at residues 523-546 is disordered; it reads PATATTGDGGPTPPAPTHSGQPQD. The LysM 4 domain maps to 549–596; the sequence is TWHVVSSGDSCQSVADDAGISRDQFHDWNPAVGRDCSTNFWLGQAYCV. A compositionally biased stretch (low complexity) spans 606 to 619; that stretch reads STVASSTTSSVTPG. A disordered region spans residues 606–636; that stretch reads STVASSTTSSVTPGPSKPEPPGPTHTGQPSD. The region spanning 639 to 686 is the LysM 5 domain; the sequence is EWDVVETGDTCGSLAESNDISLSQFFDWNPAVSRDCVANFWIGQAYCI.

This sequence belongs to the secreted LysM effector family.

Its function is as follows. Might have a role in sequestration of chitin oligosaccharides (breakdown products of fungal cell walls that are released during invasion and act as triggers of host immunity) to dampen host defense. Does not play an important role during host colonization. The polypeptide is Secreted LysM effector Vd5LysM (Verticillium dahliae (strain VdLs.17 / ATCC MYA-4575 / FGSC 10137) (Verticillium wilt)).